We begin with the raw amino-acid sequence, 385 residues long: Putative transport protein BpOF4_00890 (385 aa).

Helical transmembrane passes span Thr42–Val62, Ser63–Leu83, Val93–Ile113, Ser191–Leu211, Ile255–Leu275, Met276–Ala296, Ile304–Ile324, and Leu350–Phe370.

The protein belongs to the autoinducer-2 exporter (AI-2E) (TC 2.A.86) family.

Its subcellular location is the cell membrane. This chain is Putative transport protein BpOF4_00890, found in Alkalihalophilus pseudofirmus (strain ATCC BAA-2126 / JCM 17055 / OF4) (Bacillus pseudofirmus).